A 214-amino-acid polypeptide reads, in one-letter code: MHDISSLTTRTKALPPLRVGVGGPVGSGKTTLLEMVCKAMYPQFDLIAITNDIYTKEDQRLLTLSGALPPERILGVETGGCPHTAIREDASINLIAIDQMLEQFPDADIVFVESGGDNLAATFSPELSDLTLYIIDVASGEKIPRKGGPGITKSDLFIINKTDLAPYVGADLAVMEADTRRMRGDKPFVMCNLKTGDGLDQVIAFLKTEGLFRG.

Residue 23–30 (GPVGSGKT) participates in GTP binding.

This sequence belongs to the SIMIBI class G3E GTPase family. UreG subfamily. As to quaternary structure, homodimer. UreD, UreF and UreG form a complex that acts as a GTP-hydrolysis-dependent molecular chaperone, activating the urease apoprotein by helping to assemble the nickel containing metallocenter of UreC. The UreE protein probably delivers the nickel.

The protein resides in the cytoplasm. Functionally, facilitates the functional incorporation of the urease nickel metallocenter. This process requires GTP hydrolysis, probably effectuated by UreG. This is Urease accessory protein UreG from Bordetella pertussis (strain Tohama I / ATCC BAA-589 / NCTC 13251).